The following is a 545-amino-acid chain: Acetamidase (545 aa).

Catalysis depends on charge relay system residues lysine 130 and serine 205. The Acyl-ester intermediate role is filled by serine 229.

The protein belongs to the amidase family.

The enzyme catalyses a monocarboxylic acid amide + H2O = a monocarboxylate + NH4(+). It carries out the reaction acetamide + H2O = acetate + NH4(+). Its function is as follows. Allows acetamide to be used as a sole carbon or nitrogen source. In Aspergillus oryzae (strain ATCC 42149 / RIB 40) (Yellow koji mold), this protein is Acetamidase (amdS).